A 147-amino-acid polypeptide reads, in one-letter code: MLKVKILRLASGYGLPLPSYATPKSAGLDLYAAVDSKLVVHPGGRCAVKTGVALELPDGYEAQIRSRSGLAANFGICVLNAPGTIDSDYRGEITVVLSNFGSEDYVISRGDRVAQMVIAPVERVEWEEVNSITATSRGEGGFGSTGT.

Substrate contacts are provided by residues R67–G69, N80, and T84–D86.

Belongs to the dUTPase family. Requires Mg(2+) as cofactor.

The enzyme catalyses dUTP + H2O = dUMP + diphosphate + H(+). Its pathway is pyrimidine metabolism; dUMP biosynthesis; dUMP from dCTP (dUTP route): step 2/2. In terms of biological role, this enzyme is involved in nucleotide metabolism: it produces dUMP, the immediate precursor of thymidine nucleotides and it decreases the intracellular concentration of dUTP so that uracil cannot be incorporated into DNA. This is Deoxyuridine 5'-triphosphate nucleotidohydrolase from Anaplasma marginale (strain St. Maries).